Reading from the N-terminus, the 216-residue chain is GTP cyclohydrolase 1 (216 aa).

The Zn(2+) site is built by cysteine 108, histidine 111, and cysteine 179.

Belongs to the GTP cyclohydrolase I family. As to quaternary structure, toroid-shaped homodecamer, composed of two pentamers of five dimers.

The catalysed reaction is GTP + H2O = 7,8-dihydroneopterin 3'-triphosphate + formate + H(+). Its pathway is cofactor biosynthesis; 7,8-dihydroneopterin triphosphate biosynthesis; 7,8-dihydroneopterin triphosphate from GTP: step 1/1. This Shewanella amazonensis (strain ATCC BAA-1098 / SB2B) protein is GTP cyclohydrolase 1.